The following is a 124-amino-acid chain: SKSSTETPPSYNQLNYNENLLRFFNSKPVTAPVELDPPKGESSYVSSAREDARSTLSPVHGFEGSGGSGSSGNFTTGSNVRMSSVTNTSNAGTGTSSAGGNGNGGSGASHAPPVTVTLTESLLN.

The segment at 30–124 is disordered; the sequence is TAPVELDPPK…TVTLTESLLN (95 aa). Over residues 71–96 the composition is skewed to low complexity; the sequence is SGNFTTGSNVRMSSVTNTSNAGTGTS. Over residues 97–107 the composition is skewed to gly residues; the sequence is SAGGNGNGGSG.

As to quaternary structure, forms a heterodimer with timeless (TIM); the complex then translocates into the nucleus. Post-translationally, phosphorylated with a circadian rhythmicity, probably by the double-time protein (dbt). Phosphorylation could be implicated in the stability of per monomer and in the formation of heterodimer per-tim.

The protein resides in the nucleus. The protein localises to the cytoplasm. It is found in the perinuclear region. Essential for biological clock functions. Determines the period length of circadian and ultradian rhythms; an increase in PER dosage leads to shortened circadian rhythms and a decrease leads to lengthened circadian rhythms. Essential for the circadian rhythmicity of locomotor activity, eclosion behavior, and for the rhythmic component of the male courtship song that originates in the thoracic nervous system. The biological cycle depends on the rhythmic formation and nuclear localization of the TIM-PER complex. Light induces the degradation of TIM, which promotes elimination of PER. Nuclear activity of the heterodimer coordinatively regulates PER and TIM transcription through a negative feedback loop. Behaves as a negative element in circadian transcriptional loop. Does not appear to bind DNA, suggesting indirect transcriptional inhibition. The chain is Period circadian protein (per) from Hirtodrosophila pictiventris (Fruit fly).